Reading from the N-terminus, the 333-residue chain is MNIGQRYGWEFTLAALLIIEILLFGIANSRMLDINILLLSTSDFICIGIVALPLTMVIVSGGIDISFGSTIGLCAISLGVMNQAGIPMAAAIPLTLLVGAICGVINAALILYTGINPLVITLGTLYLFGGSALLLSGISGATGYEGIGGFPQALTDFANLTLFGLPMPLMLFLLCVLICWLFMHRTHSGRNIFLIGQSSKVARYAAIPIARTLYLLYTLTGIASAIAAIVLVSYFGSARSDLGASFLMPAITAVVLGGANIYGGSGSIIGTALAILLIGYLQQGLQMAGVPNQVSSALAGALLIIAVVGRSISLHHHQIRDWIQRWRNQRLSS.

Transmembrane regions (helical) follow at residues tyrosine 7–alanine 27, isoleucine 45–isoleucine 65, threonine 70–alanine 90, alanine 91–leucine 111, leucine 118–isoleucine 138, leucine 162–phenylalanine 182, threonine 212–valine 232, serine 240–asparagine 260, isoleucine 261–leucine 281, and alanine 288–valine 308.

This sequence belongs to the binding-protein-dependent transport system permease family. AraH/RbsC subfamily. In terms of assembly, the complex is composed of two ATP-binding proteins (LsrA), two transmembrane proteins (LsrC and LsrD) and a solute-binding protein (LsrB).

Its subcellular location is the cell inner membrane. Functionally, part of the ABC transporter complex LsrABCD involved in autoinducer 2 (AI-2) import. Probably responsible for the translocation of the substrate across the membrane. The sequence is that of Autoinducer 2 import system permease protein LsrD (lsrD) from Photorhabdus luminescens (Xenorhabdus luminescens).